The sequence spans 390 residues: ATP-sensitive inward rectifier potassium channel 11 (390 aa).

Topologically, residues 1–65 (MLSRKGIIPE…LQDVFTTLVD (65 aa)) are cytoplasmic. ATP contacts are provided by Asn-48 and Arg-50. A helical transmembrane segment spans residues 66–92 (LKWPHTLLIFTMSFLCSWLLFAMVWWL). The Extracellular portion of the chain corresponds to 93–116 (IAFAHGDLAPGEGTNVPCVTSIHS). Cysteines 110 and 142 form a disulfide. The discontinuously helical; Pore-forming intramembrane region spans 117 to 133 (FSSAFLFSIEVQVTIGF). K(+) is bound by residues Thr-130 and Phe-133. A Selectivity filter motif is present at residues 130–135 (TIGFGG). Residues 134–142 (GGRMVTEEC) lie on the Extracellular side of the membrane. A helical transmembrane segment spans residues 143 to 171 (PLAILILIVQNIVGLMINAIMLGCIFMKT). The Cytoplasmic portion of the chain corresponds to 172–390 (AQAHRRAETL…KFSISPDSLS (219 aa)). Arg-176 provides a ligand contact to a 1,2-diacyl-sn-glycero-3-phospho-(1D-myo-inositol-4,5-bisphosphate). Tyr-330 is a binding site for ATP. At Thr-341 the chain carries Phosphothreonine; by MAPK1. Ser-385 carries the phosphoserine; by MAPK1 modification.

Belongs to the inward rectifier-type potassium channel (TC 1.A.2.1) family. KCNJ11 subfamily. In terms of assembly, homotetramer; the homotetramer binds four ATP molecules (one ATP per subunit). Forms an heterooctamer with ABCC8/SUR1; one KCNJ11 homotetramer interacts with four ABCC8/SUR1 molecules. Interacts with ABCC9/SUR2. Phosphorylation by MAPK1 results in changes in channel gating that destabilize the closed states and reduce the ATP sensitivity.

It localises to the membrane. It carries out the reaction K(+)(in) = K(+)(out). KATP channels are regulated by cytoplasmic ATP/ADP ratios; ATP inhibits the channel by closing the pore, while ADP activates the channel. Activated by phosphatidylinositol 4,5-biphosphate (PtdIns(4,5)P2). In terms of biological role, inward rectifier potassium channel that forms the pore of ATP-sensitive potassium channels (KATP), regulating potassium permeability as a function of cytoplasmic ATP and ADP concentrations in many different cells. Inward rectifier potassium channels are characterized by a greater tendency to allow potassium to flow into the cell rather than out of it. Their voltage dependence is regulated by the concentration of extracellular potassium; as external potassium is raised, the voltage range of the channel opening shifts to more positive voltages. The inward rectification is mainly due to the blockage of outward current by internal magnesium. Can be blocked by extracellular barium. In pancreatic cells, it forms KATP channels with ABCC8/SUR1. Can form cardiac and smooth muscle-type KATP channels with ABCC9. The protein is ATP-sensitive inward rectifier potassium channel 11 (Kcnj11) of Mus musculus (Mouse).